The chain runs to 498 residues: 4-aminobutyrate aminotransferase (498 aa).

Residue 164–165 (GS) coordinates pyridoxal 5'-phosphate. R222 provides a ligand contact to substrate. The residue at position 356 (K356) is an N6-(pyridoxal phosphate)lysine. T381 serves as a coordination point for pyridoxal 5'-phosphate.

The protein belongs to the class-III pyridoxal-phosphate-dependent aminotransferase family. As to quaternary structure, homodimer. The cofactor is pyridoxal 5'-phosphate.

Its subcellular location is the cytoplasm. It catalyses the reaction 4-aminobutanoate + 2-oxoglutarate = succinate semialdehyde + L-glutamate. In terms of biological role, deaminates gamma-aminobutyric acid (GABA) to succinate-semialdehyde, which in turn is converted to succinate by the succinate semialdehyde dehydrogenase. Required for the degradation of GABA, which is important for utilization of GABA as nitrogen source. The chain is 4-aminobutyrate aminotransferase (gatA) from Emericella nidulans (strain FGSC A4 / ATCC 38163 / CBS 112.46 / NRRL 194 / M139) (Aspergillus nidulans).